The sequence spans 465 residues: Ribulose bisphosphate carboxylase large chain (465 aa).

K4 is subject to N6,N6,N6-trimethyllysine. 2 residues coordinate substrate: N113 and T163. K165 functions as the Proton acceptor in the catalytic mechanism. Position 167 (K167) interacts with substrate. Residues K191, D193, and E194 each coordinate Mg(2+). Residue K191 is modified to N6-carboxylysine. H284 acts as the Proton acceptor in catalysis. Substrate-binding residues include R285, H317, and S369.

It belongs to the RuBisCO large chain family. Type I subfamily. Heterohexadecamer of 8 large chains and 8 small chains; disulfide-linked. The disulfide link is formed within the large subunit homodimers. Requires Mg(2+) as cofactor. The disulfide bond which can form in the large chain dimeric partners within the hexadecamer appears to be associated with oxidative stress and protein turnover.

The protein localises to the plastid. The protein resides in the chloroplast. The catalysed reaction is 2 (2R)-3-phosphoglycerate + 2 H(+) = D-ribulose 1,5-bisphosphate + CO2 + H2O. It carries out the reaction D-ribulose 1,5-bisphosphate + O2 = 2-phosphoglycolate + (2R)-3-phosphoglycerate + 2 H(+). Its function is as follows. RuBisCO catalyzes two reactions: the carboxylation of D-ribulose 1,5-bisphosphate, the primary event in carbon dioxide fixation, as well as the oxidative fragmentation of the pentose substrate in the photorespiration process. Both reactions occur simultaneously and in competition at the same active site. This chain is Ribulose bisphosphate carboxylase large chain, found in Senega cruciata (Cross-leaved milkwort).